We begin with the raw amino-acid sequence, 603 residues long: uncharacterized protein (603 aa).

The segment covering Glu-496–Lys-513 has biased composition (acidic residues). 2 disordered regions span residues Glu-496–Glu-536 and Ala-549–Gln-568. A compositionally biased stretch (polar residues) spans Asn-517–Gly-533.

The protein belongs to the herpesviridae US22 family.

This is an uncharacterized protein from Human cytomegalovirus (strain AD169) (HHV-5).